The sequence spans 312 residues: Olfactory receptor 2L8 (312 aa).

Residues 1–24 (MENYNQTSTDFILLGLFPPSRIDL) lie on the Extracellular side of the membrane. N-linked (GlcNAc...) asparagine glycosylation is present at asparagine 5. The chain crosses the membrane as a helical span at residues 25–48 (FFFILIVFIFLMALIGNLSMILLI). Residues 49–56 (FLDTHLHT) lie on the Cytoplasmic side of the membrane. A helical membrane pass occupies residues 57-78 (PMYFLLSQLSLIDLNYISTIVP). Residues 79 to 99 (KMASDFLHGNKSISFTGCGIQ) lie on the Extracellular side of the membrane. An N-linked (GlcNAc...) asparagine glycan is attached at asparagine 88. A disulfide bond links cysteine 96 and cysteine 188. Residues 100-119 (SFFFLALGGAEALLLASMAY) form a helical membrane-spanning segment. The Cytoplasmic portion of the chain corresponds to 120–138 (DRYIAICFPLHYLIRMSKR). A helical transmembrane segment spans residues 139–157 (VCVLMITGSWIIGSINACA). At 158–194 (HTVYVLHIPYCRSRAINHFFCDVPAMVTLACMDTWVY) the chain is on the extracellular side. The helical transmembrane segment at 195–218 (EGTVFLSATIFLVFPFIGISCSYG) threads the bilayer. The Cytoplasmic segment spans residues 219–235 (QVLFAVYHMKSAEGRKK). Residues 236–258 (AYLTCSTHLTVVTFYYAPFVYTY) form a helical membrane-spanning segment. Residues 259–271 (LRPRSLRSPTEDK) lie on the Extracellular side of the membrane. Residues 272 to 291 (VLAVFYTILTPMLNPIIYSL) traverse the membrane as a helical segment. Over 292-312 (RNKEVMGALTRVSQRICSVKM) the chain is Cytoplasmic.

This sequence belongs to the G-protein coupled receptor 1 family.

Its subcellular location is the cell membrane. In terms of biological role, odorant receptor. The polypeptide is Olfactory receptor 2L8 (OR2L8) (Homo sapiens (Human)).